The chain runs to 128 residues: Large ribosomal subunit protein eL22 (128 aa).

Belongs to the eukaryotic ribosomal protein eL22 family. In terms of assembly, component of the large ribosomal subunit.

The protein resides in the cytoplasm. Functionally, component of the large ribosomal subunit. The ribosome is a large ribonucleoprotein complex responsible for the synthesis of proteins in the cell. The chain is Large ribosomal subunit protein eL22 (rpl22) from Ictalurus punctatus (Channel catfish).